We begin with the raw amino-acid sequence, 435 residues long: Cell adhesion molecule 2 (435 aa).

Positions methionine 1 to glycine 24 are cleaved as a signal peptide. Topologically, residues glutamine 25–histidine 367 are extracellular. The Ig-like V-type domain maps to proline 27–threonine 119. N-linked (GlcNAc...) asparagine glycans are attached at residues asparagine 31 and asparagine 51. Cystine bridges form between cysteine 44-cysteine 104, cysteine 146-cysteine 203, and cysteine 248-cysteine 296. Ig-like C2-type domains lie at proline 127–glutamine 219 and proline 227–isoleucine 312. An N-linked (GlcNAc...) asparagine glycan is attached at asparagine 291. A compositionally biased stretch (low complexity) spans threonine 341–serine 351. The tract at residues threonine 341–alanine 360 is disordered. Residues alanine 368–leucine 388 traverse the membrane as a helical segment. The Cytoplasmic segment spans residues glycine 389–isoleucine 435. Serine 423 bears the Phosphoserine mark.

It belongs to the nectin family. Post-translationally, glycosylation at Asn-51 reduces adhesive binding.

It is found in the cell membrane. It localises to the synapse. Its subcellular location is the cell projection. The protein resides in the axon. Adhesion molecule that engages in homo- and heterophilic interactions with the other nectin-like family members, leading to cell aggregation. Important for synapse organization, providing regulated trans-synaptic adhesion. Preferentially binds to oligodendrocytes. This Rattus norvegicus (Rat) protein is Cell adhesion molecule 2 (Cadm2).